The chain runs to 319 residues: Aspartate carbamoyltransferase catalytic subunit (319 aa).

Carbamoyl phosphate contacts are provided by arginine 55 and threonine 56. An L-aspartate-binding site is contributed by lysine 83. Carbamoyl phosphate is bound by residues arginine 105, histidine 144, and glutamine 147. Residues arginine 177 and arginine 231 each coordinate L-aspartate. 2 residues coordinate carbamoyl phosphate: glycine 272 and proline 273.

This sequence belongs to the aspartate/ornithine carbamoyltransferase superfamily. ATCase family. As to quaternary structure, heterododecamer (2C3:3R2) of six catalytic PyrB chains organized as two trimers (C3), and six regulatory PyrI chains organized as three dimers (R2).

The enzyme catalyses carbamoyl phosphate + L-aspartate = N-carbamoyl-L-aspartate + phosphate + H(+). It functions in the pathway pyrimidine metabolism; UMP biosynthesis via de novo pathway; (S)-dihydroorotate from bicarbonate: step 2/3. Its function is as follows. Catalyzes the condensation of carbamoyl phosphate and aspartate to form carbamoyl aspartate and inorganic phosphate, the committed step in the de novo pyrimidine nucleotide biosynthesis pathway. The protein is Aspartate carbamoyltransferase catalytic subunit of Nocardia farcinica (strain IFM 10152).